Here is a 264-residue protein sequence, read N- to C-terminus: Phosphonoacetaldehyde hydrolase (264 aa).

The active-site Nucleophile is aspartate 9. Residues aspartate 9 and alanine 11 each contribute to the Mg(2+) site. Lysine 50 serves as the catalytic Schiff-base intermediate with substrate. Residue aspartate 183 coordinates Mg(2+).

The protein belongs to the HAD-like hydrolase superfamily. PhnX family. Homodimer. Mg(2+) is required as a cofactor.

It catalyses the reaction phosphonoacetaldehyde + H2O = acetaldehyde + phosphate + H(+). In terms of biological role, involved in phosphonate degradation. This Bacillus cereus (strain AH187) protein is Phosphonoacetaldehyde hydrolase.